Reading from the N-terminus, the 37-residue chain is NADH dehydrogenase [ubiquinone] 1 alpha subcomplex subunit 5 (37 aa).

It belongs to the complex I NDUFA5 subunit family. As to quaternary structure, complex I is composed of about 45 different subunits.

Its subcellular location is the mitochondrion inner membrane. In terms of biological role, accessory subunit of the mitochondrial membrane respiratory chain NADH dehydrogenase (Complex I), that is believed not to be involved in catalysis. Complex I functions in the transfer of electrons from NADH to the respiratory chain. The immediate electron acceptor for the enzyme is believed to be ubiquinone. The chain is NADH dehydrogenase [ubiquinone] 1 alpha subcomplex subunit 5 from Solanum tuberosum (Potato).